A 465-amino-acid chain; its full sequence is Alpha-2A adrenergic receptor (465 aa).

The Extracellular portion of the chain corresponds to 1-48 (MFRQEQPLAEGSFAPMGSLQPDAGNSSWNGTEAPGGGTRATPYSLQVT). Asn-25 and Asn-29 each carry an N-linked (GlcNAc...) asparagine glycan. Residues 49–74 (LTLVCLAGLLMLFTVFGNVLVIIAVF) form a helical membrane-spanning segment. Residues 75-85 (TSRALKAPQNL) lie on the Cytoplasmic side of the membrane. A helical membrane pass occupies residues 86–111 (FLVSLASADILVATLVIPFSLANEVM). Topologically, residues 112 to 121 (GYWYFGKVWC) are extracellular. The cysteines at positions 121 and 203 are disulfide-linked. Residues 122-144 (EIYLALDVLFCTSSIVHLCAISL) form a helical membrane-spanning segment. Over 145 to 164 (DRYWSITQAIEYNLKRTPRR) the chain is Cytoplasmic. The chain crosses the membrane as a helical span at residues 165-188 (IKAIIVTVWVISAVISFPPLISIE). Residues 189 to 207 (KKGAGGGQQPAEPSCKIND) are Extracellular-facing. A helical membrane pass occupies residues 208–232 (QKWYVISSSIGSFFAPCLIMILVYV). Residues 233–389 (RIYQIAKRRT…RQNREKRFTF (157 aa)) lie on the Cytoplasmic side of the membrane. The disordered stretch occupies residues 242 to 377 (TRVPPSRRGP…RAGGAKASRW (136 aa)). Over residues 313 to 330 (SSEHAERPQGPGKPERGP) the composition is skewed to basic and acidic residues. Ser-346 bears the Phosphoserine mark. Residues 353 to 364 (GAAGPGASGSGQ) are compositionally biased toward gly residues. Arg-368 carries the omega-N-methylarginine modification. Residues 390-414 (VLAVVIGVFVVCWFPFFFTYTLIAV) traverse the membrane as a helical segment. Over 415-424 (GCPVPYQLFN) the chain is Extracellular. Residues 425–445 (FFFWFGYCNSSLNPVIYTIFN) traverse the membrane as a helical segment. Residues 446 to 465 (HDFRRAFKKILCRGDRKRIV) are Cytoplasmic-facing. Residue Cys-457 is the site of S-palmitoyl cysteine attachment.

Belongs to the G-protein coupled receptor 1 family. Adrenergic receptor subfamily. ADRA2A sub-subfamily. Expressed in brain.

It is found in the cell membrane. In terms of biological role, alpha-2 adrenergic receptors mediate the catecholamine-induced inhibition of adenylate cyclase through the action of G proteins. The chain is Alpha-2A adrenergic receptor from Rattus norvegicus (Rat).